A 285-amino-acid chain; its full sequence is Nucleotide-binding protein NTHI1314 (285 aa).

8–15 (GRSGAGKS) lines the ATP pocket. A GTP-binding site is contributed by 56-59 (DIRN).

It belongs to the RapZ-like family.

Displays ATPase and GTPase activities. In Haemophilus influenzae (strain 86-028NP), this protein is Nucleotide-binding protein NTHI1314.